The primary structure comprises 205 residues: GTP cyclohydrolase 1 (205 aa).

C94, H97, and C165 together coordinate Zn(2+).

This sequence belongs to the GTP cyclohydrolase I family. In terms of assembly, toroid-shaped homodecamer, composed of two pentamers of five dimers.

It carries out the reaction GTP + H2O = 7,8-dihydroneopterin 3'-triphosphate + formate + H(+). It functions in the pathway cofactor biosynthesis; 7,8-dihydroneopterin triphosphate biosynthesis; 7,8-dihydroneopterin triphosphate from GTP: step 1/1. This Sinorhizobium medicae (strain WSM419) (Ensifer medicae) protein is GTP cyclohydrolase 1.